The chain runs to 251 residues: Orotidine 5'-phosphate decarboxylase (251 aa).

Residues Asp-19, Lys-42, 69-78 (DLKFHDIPNT), Thr-133, Arg-194, Gln-204, Gly-224, and Arg-225 each bind substrate. The active-site Proton donor is Lys-71.

Belongs to the OMP decarboxylase family. Type 1 subfamily. In terms of assembly, homodimer.

The catalysed reaction is orotidine 5'-phosphate + H(+) = UMP + CO2. It functions in the pathway pyrimidine metabolism; UMP biosynthesis via de novo pathway; UMP from orotate: step 2/2. Functionally, catalyzes the decarboxylation of orotidine 5'-monophosphate (OMP) to uridine 5'-monophosphate (UMP). The protein is Orotidine 5'-phosphate decarboxylase of Syntrophus aciditrophicus (strain SB).